We begin with the raw amino-acid sequence, 323 residues long: Serine racemase (323 aa).

Residues serine 32, serine 33, and lysine 52 each coordinate ATP. Lysine 57 functions as the Proton acceptor in the catalytic mechanism. At lysine 57 the chain carries Lysino-D-alanine (Lys); alternate. At lysine 57 the chain carries N6-(pyridoxal phosphate)lysine; alternate. Position 79 (threonine 79) interacts with Ca(2+). The active-site Proton acceptor is the serine 82. Asparagine 84 serves as a coordination point for pyridoxal 5'-phosphate. Residues glutamine 87 and tyrosine 119 each coordinate ATP. Aspartate 176 contributes to the Mg(2+) binding site. Pyridoxal 5'-phosphate contacts are provided by glycine 183, glycine 184, glycine 185, glycine 186, and leucine 187. Residues glutamate 208, glycine 212, and aspartate 214 each contribute to the Ca(2+) site. Mg(2+) is bound by residues glutamate 208, glycine 212, and aspartate 214. Glutamate 208, glycine 212, and aspartate 214 together coordinate Mn(2+). Lysine 277 provides a ligand contact to ATP. Serine 308 is a binding site for pyridoxal 5'-phosphate. Asparagine 311 serves as a coordination point for ATP.

The protein belongs to the serine/threonine dehydratase family. In terms of assembly, homodimer. Requires Mg(2+) as cofactor. Mn(2+) serves as cofactor. Ca(2+) is required as a cofactor. It depends on pyridoxal 5'-phosphate as a cofactor. Modification of the active site Lys by its substrate Ser to lysino-D-alanine reduces but does not abolish enzyme activity.

The catalysed reaction is L-serine = D-serine. The enzyme catalyses L-serine = pyruvate + NH4(+). It carries out the reaction D-serine = pyruvate + NH4(+). Its activity is regulated as follows. Allosterically activated by ATP, by magnesium, and possibly also by other divalent metal cations. Its function is as follows. Catalyzes the synthesis of D-serine from L-serine. Has dehydratase activity towards both L-serine and D-serine. The sequence is that of Serine racemase from Schizosaccharomyces pombe (strain 972 / ATCC 24843) (Fission yeast).